We begin with the raw amino-acid sequence, 539 residues long: Squalene monooxygenase SE1 (539 aa).

2 helical membrane passes run 22–42 (LLIDQYFLGWIFAFLFGFLLL) and 71–91 (IAGSTDVIIVGAGVAGSALAY). FAD contacts are provided by residues 84-85 (VA), 104-105 (ER), arginine 112, arginine 183, valine 199, aspartate 361, and methionine 374. Residues 472-492 (LFLHFFAVAIYGVGRLLIPFP) form a helical membrane-spanning segment.

Belongs to the squalene monooxygenase family. Requires FAD as cofactor. In terms of tissue distribution, mostly expressed in flower buds and leaves, and, to a lower extent, at high levels thought, in roots and petioles. In petioles, preferentially observed in vascular bundle tissue (phloem cells and parenchymatous cells near xylem) and resin ducts.

The protein resides in the microsome membrane. It is found in the endoplasmic reticulum membrane. The enzyme catalyses squalene + reduced [NADPH--hemoprotein reductase] + O2 = (S)-2,3-epoxysqualene + oxidized [NADPH--hemoprotein reductase] + H2O + H(+). It participates in terpene metabolism; lanosterol biosynthesis; lanosterol from farnesyl diphosphate: step 2/3. In terms of biological role, component of the triterpene saponins (e.g. ginsenosides or panaxosides) and phytosterols biosynthetic pathways. Catalyzes the first oxygenation step in sterol biosynthesis and is suggested to be one of the rate-limiting enzymes in this pathway. This is Squalene monooxygenase SE1 from Panax ginseng (Korean ginseng).